A 285-amino-acid polypeptide reads, in one-letter code: ATP synthase gamma chain (285 aa).

This sequence belongs to the ATPase gamma chain family. As to quaternary structure, F-type ATPases have 2 components, CF(1) - the catalytic core - and CF(0) - the membrane proton channel. CF(1) has five subunits: alpha(3), beta(3), gamma(1), delta(1), epsilon(1). CF(0) has three main subunits: a, b and c.

Its subcellular location is the cell membrane. Functionally, produces ATP from ADP in the presence of a proton gradient across the membrane. The gamma chain is believed to be important in regulating ATPase activity and the flow of protons through the CF(0) complex. This Halalkalibacterium halodurans (strain ATCC BAA-125 / DSM 18197 / FERM 7344 / JCM 9153 / C-125) (Bacillus halodurans) protein is ATP synthase gamma chain.